We begin with the raw amino-acid sequence, 215 residues long: Golgi-associated RAB2 interactor protein 5A (215 aa).

Disordered regions lie at residues 1 to 20 and 174 to 215; these read MKRG…AGPG and QDYS…LWGL. Residues 178–191 are compositionally biased toward acidic residues; it reads ALEDDEDDDEDEDR.

It belongs to the GARIN family. In terms of assembly, interacts (via N-terminus) with RAB2B (in GTP-bound form).

Its subcellular location is the golgi apparatus. Functionally, RAB2B effector protein which promotes cytosolic DNA-induced innate immune responses. Regulates IFN responses against DNA viruses by regulating the CGAS-STING signaling axis. The protein is Golgi-associated RAB2 interactor protein 5A (GARIN5A) of Bos taurus (Bovine).